Here is a 611-residue protein sequence, read N- to C-terminus: UvrABC system protein C (611 aa).

One can recognise a GIY-YIG domain in the interval aspartate 12–isoleucine 96. The region spanning glutamate 202–alanine 237 is the UVR domain.

It belongs to the UvrC family. In terms of assembly, interacts with UvrB in an incision complex.

It is found in the cytoplasm. In terms of biological role, the UvrABC repair system catalyzes the recognition and processing of DNA lesions. UvrC both incises the 5' and 3' sides of the lesion. The N-terminal half is responsible for the 3' incision and the C-terminal half is responsible for the 5' incision. This is UvrABC system protein C from Nautilia profundicola (strain ATCC BAA-1463 / DSM 18972 / AmH).